Consider the following 462-residue polypeptide: Nuclear factor interleukin-3-regulated protein (462 aa).

A Glycyl lysine isopeptide (Lys-Gly) (interchain with G-Cter in SUMO2) cross-link involves residue lysine 24. Positions 73-136 constitute a bZIP domain; sequence DAMYWEKRRK…GLISSTAYAQ (64 aa). Residues 79 to 95 are basic motif; it reads KRRKNNEAAKRSREKRR. The leucine-zipper stretch occupies residues 99–106; the sequence is LVLENKLI. 2 disordered regions span residues 189-236 and 254-303; these read DVSE…RDDR and GYSH…HSPV. Lysine 214 participates in a covalent cross-link: Glycyl lysine isopeptide (Lys-Gly) (interchain with G-Cter in SUMO2). Residue lysine 219 forms a Glycyl lysine isopeptide (Lys-Gly) (interchain with G-Cter in SUMO1); alternate linkage. Lysine 219 is covalently cross-linked (Glycyl lysine isopeptide (Lys-Gly) (interchain with G-Cter in SUMO2); alternate). A compositionally biased stretch (basic and acidic residues) spans 227 to 236; sequence SYAREPRDDR. The segment covering 264–274 has biased composition (polar residues); it reads VNRSSSNSPRT. Position 301 is a phosphoserine (serine 301). Glycyl lysine isopeptide (Lys-Gly) (interchain with G-Cter in SUMO2) cross-links involve residues lysine 314, lysine 326, lysine 332, lysine 337, and lysine 350. Residue serine 353 is modified to Phosphoserine. Residues lysine 360, lysine 394, lysine 401, lysine 406, lysine 412, lysine 419, lysine 424, lysine 434, and lysine 448 each participate in a glycyl lysine isopeptide (Lys-Gly) (interchain with G-Cter in SUMO2) cross-link.

The protein belongs to the bZIP family. NFIL3 subfamily. Homodimer. Binds DNA as a dimer. Interacts with CRY2, DR1 and PER2. Interacts with NR0B2. Interacts with MYSM1.

It is found in the nucleus. Acts as a transcriptional regulator that recognizes and binds to the sequence 5'-[GA]TTA[CT]GTAA[CT]-3', a sequence present in many cellular and viral promoters. Represses transcription from promoters with activating transcription factor (ATF) sites. Represses promoter activity in osteoblasts. Represses transcriptional activity of PER1. Represses transcriptional activity of PER2 via the B-site on the promoter. Activates transcription from the interleukin-3 promoter in T-cells. Competes for the same consensus-binding site with PAR DNA-binding factors (DBP, HLF and TEF). Component of the circadian clock that acts as a negative regulator for the circadian expression of PER2 oscillation in the cell-autonomous core clock. Protects pro-B cells from programmed cell death. Represses the transcription of CYP2A5. Positively regulates the expression and activity of CES2 by antagonizing the repressive action of NR1D1 on CES2. Required for the development of natural killer cell precursors. This is Nuclear factor interleukin-3-regulated protein (NFIL3) from Bos taurus (Bovine).